We begin with the raw amino-acid sequence, 398 residues long: tRNA N6-adenosine threonylcarbamoyltransferase (398 aa).

Histidine 162, histidine 166, and tyrosine 183 together coordinate a divalent metal cation. Residues 183-187, aspartate 215, glycine 230, glutamate 234, and asparagine 329 contribute to the substrate site; that span reads YVSGG. A divalent metal cation is bound at residue aspartate 357.

This sequence belongs to the KAE1 / TsaD family. In terms of assembly, component of the EKC/KEOPS complex composed of at least BUD32, CGI121, GON7, KAE1 and PCC1; the whole complex dimerizes. The cofactor is a divalent metal cation.

The protein localises to the cytoplasm. Its subcellular location is the nucleus. It catalyses the reaction L-threonylcarbamoyladenylate + adenosine(37) in tRNA = N(6)-L-threonylcarbamoyladenosine(37) in tRNA + AMP + H(+). Component of the EKC/KEOPS complex that is required for the formation of a threonylcarbamoyl group on adenosine at position 37 (t(6)A37) in tRNAs that read codons beginning with adenine. The complex is probably involved in the transfer of the threonylcarbamoyl moiety of threonylcarbamoyl-AMP (TC-AMP) to the N6 group of A37. KAE1 likely plays a direct catalytic role in this reaction, but requires other protein(s) of the complex to fulfill this activity. The EKC/KEOPS complex also promotes both telomere uncapping and telomere elongation. The complex is required for efficient recruitment of transcriptional coactivators. This Cryptococcus neoformans var. neoformans serotype D (strain B-3501A) (Filobasidiella neoformans) protein is tRNA N6-adenosine threonylcarbamoyltransferase.